Here is a 178-residue protein sequence, read N- to C-terminus: Large ribosomal subunit protein uL5 (178 aa).

The protein belongs to the universal ribosomal protein uL5 family. Part of the 50S ribosomal subunit; part of the 5S rRNA/L5/L18/L25 subcomplex. Contacts the 5S rRNA and the P site tRNA. Forms a bridge to the 30S subunit in the 70S ribosome.

Functionally, this is one of the proteins that bind and probably mediate the attachment of the 5S RNA into the large ribosomal subunit, where it forms part of the central protuberance. In the 70S ribosome it contacts protein S13 of the 30S subunit (bridge B1b), connecting the 2 subunits; this bridge is implicated in subunit movement. Contacts the P site tRNA; the 5S rRNA and some of its associated proteins might help stabilize positioning of ribosome-bound tRNAs. The sequence is that of Large ribosomal subunit protein uL5 from Acinetobacter baumannii (strain AB0057).